A 1400-amino-acid chain; its full sequence is DNA-directed RNA polymerase subunit beta' (1400 aa).

Cysteine 71, cysteine 73, cysteine 86, and cysteine 89 together coordinate Zn(2+). Mg(2+) is bound by residues aspartate 462, aspartate 464, and aspartate 466. Zn(2+)-binding residues include cysteine 810, cysteine 884, cysteine 891, and cysteine 894. Residues 1377 to 1400 (REKQATIVPPAAPEAEPLALPPVE) form a disordered region.

Belongs to the RNA polymerase beta' chain family. In terms of assembly, the RNAP catalytic core consists of 2 alpha, 1 beta, 1 beta' and 1 omega subunit. When a sigma factor is associated with the core the holoenzyme is formed, which can initiate transcription. Mg(2+) serves as cofactor. It depends on Zn(2+) as a cofactor.

It catalyses the reaction RNA(n) + a ribonucleoside 5'-triphosphate = RNA(n+1) + diphosphate. Functionally, DNA-dependent RNA polymerase catalyzes the transcription of DNA into RNA using the four ribonucleoside triphosphates as substrates. The chain is DNA-directed RNA polymerase subunit beta' from Rhodopseudomonas palustris (strain HaA2).